The primary structure comprises 281 residues: 4-diphosphocytidyl-2-C-methyl-D-erythritol kinase (281 aa).

The active site involves K15. 98 to 108 (PTGAGLGGGSS) lines the ATP pocket. Residue D140 is part of the active site.

Belongs to the GHMP kinase family. IspE subfamily.

The catalysed reaction is 4-CDP-2-C-methyl-D-erythritol + ATP = 4-CDP-2-C-methyl-D-erythritol 2-phosphate + ADP + H(+). It participates in isoprenoid biosynthesis; isopentenyl diphosphate biosynthesis via DXP pathway; isopentenyl diphosphate from 1-deoxy-D-xylulose 5-phosphate: step 3/6. Functionally, catalyzes the phosphorylation of the position 2 hydroxy group of 4-diphosphocytidyl-2C-methyl-D-erythritol. The chain is 4-diphosphocytidyl-2-C-methyl-D-erythritol kinase from Neisseria gonorrhoeae (strain NCCP11945).